The primary structure comprises 89 residues: Small ribosomal subunit protein uS15 (89 aa).

The protein belongs to the universal ribosomal protein uS15 family. In terms of assembly, part of the 30S ribosomal subunit. Forms a bridge to the 50S subunit in the 70S ribosome, contacting the 23S rRNA.

Functionally, one of the primary rRNA binding proteins, it binds directly to 16S rRNA where it helps nucleate assembly of the platform of the 30S subunit by binding and bridging several RNA helices of the 16S rRNA. Forms an intersubunit bridge (bridge B4) with the 23S rRNA of the 50S subunit in the ribosome. The sequence is that of Small ribosomal subunit protein uS15 from Acidothermus cellulolyticus (strain ATCC 43068 / DSM 8971 / 11B).